The following is an 81-amino-acid chain: ATP synthase subunit c (81 aa).

A run of 2 helical transmembrane segments spans residues 7–27 (AASVLSAALAIGLGSLGPGLG) and 57–77 (LAFMEALTIYGLVVALVLLFA).

It belongs to the ATPase C chain family. F-type ATPases have 2 components, F(1) - the catalytic core - and F(0) - the membrane proton channel. F(1) has five subunits: alpha(3), beta(3), gamma(1), delta(1), epsilon(1). F(0) has four main subunits: a(1), b(1), b'(1) and c(10-14). The alpha and beta chains form an alternating ring which encloses part of the gamma chain. F(1) is attached to F(0) by a central stalk formed by the gamma and epsilon chains, while a peripheral stalk is formed by the delta, b and b' chains.

The protein resides in the cellular thylakoid membrane. F(1)F(0) ATP synthase produces ATP from ADP in the presence of a proton or sodium gradient. F-type ATPases consist of two structural domains, F(1) containing the extramembraneous catalytic core and F(0) containing the membrane proton channel, linked together by a central stalk and a peripheral stalk. During catalysis, ATP synthesis in the catalytic domain of F(1) is coupled via a rotary mechanism of the central stalk subunits to proton translocation. Functionally, key component of the F(0) channel; it plays a direct role in translocation across the membrane. A homomeric c-ring of between 10-14 subunits forms the central stalk rotor element with the F(1) delta and epsilon subunits. The protein is ATP synthase subunit c of Synechococcus sp. (strain JA-3-3Ab) (Cyanobacteria bacterium Yellowstone A-Prime).